The chain runs to 202 residues: 3-isopropylmalate dehydratase small subunit 1 (202 aa).

The protein belongs to the LeuD family. LeuD type 1 subfamily. Heterodimer of LeuC and LeuD.

It catalyses the reaction (2R,3S)-3-isopropylmalate = (2S)-2-isopropylmalate. It participates in amino-acid biosynthesis; L-leucine biosynthesis; L-leucine from 3-methyl-2-oxobutanoate: step 2/4. Functionally, catalyzes the isomerization between 2-isopropylmalate and 3-isopropylmalate, via the formation of 2-isopropylmaleate. The polypeptide is 3-isopropylmalate dehydratase small subunit 1 (Mannheimia succiniciproducens (strain KCTC 0769BP / MBEL55E)).